We begin with the raw amino-acid sequence, 347 residues long: GMP reductase (347 aa).

108–131 (ADFEKTKQILDLNPALNFVCIDVA) contacts NADP(+). Positions 181 and 183 each coordinate K(+). Cys-186 functions as the Thioimidate intermediate in the catalytic mechanism. 216–239 (IVSDGGCTTPGDVAKAFGGGADFV) serves as a coordination point for NADP(+).

Belongs to the IMPDH/GMPR family. GuaC type 1 subfamily. In terms of assembly, homotetramer.

It carries out the reaction IMP + NH4(+) + NADP(+) = GMP + NADPH + 2 H(+). In terms of biological role, catalyzes the irreversible NADPH-dependent deamination of GMP to IMP. It functions in the conversion of nucleobase, nucleoside and nucleotide derivatives of G to A nucleotides, and in maintaining the intracellular balance of A and G nucleotides. The polypeptide is GMP reductase (Shigella dysenteriae serotype 1 (strain Sd197)).